Consider the following 354-residue polypeptide: Uroporphyrinogen decarboxylase (354 aa).

Residues 27-31 (RQAGR), Asp77, Tyr154, Ser209, and His327 each bind substrate.

This sequence belongs to the uroporphyrinogen decarboxylase family. In terms of assembly, homodimer.

The protein localises to the cytoplasm. The catalysed reaction is uroporphyrinogen III + 4 H(+) = coproporphyrinogen III + 4 CO2. The protein operates within porphyrin-containing compound metabolism; protoporphyrin-IX biosynthesis; coproporphyrinogen-III from 5-aminolevulinate: step 4/4. Its function is as follows. Catalyzes the decarboxylation of four acetate groups of uroporphyrinogen-III to yield coproporphyrinogen-III. The chain is Uroporphyrinogen decarboxylase from Shewanella frigidimarina (strain NCIMB 400).